The sequence spans 155 residues: SsrA-binding protein (155 aa).

It belongs to the SmpB family.

The protein localises to the cytoplasm. Its function is as follows. Required for rescue of stalled ribosomes mediated by trans-translation. Binds to transfer-messenger RNA (tmRNA), required for stable association of tmRNA with ribosomes. tmRNA and SmpB together mimic tRNA shape, replacing the anticodon stem-loop with SmpB. tmRNA is encoded by the ssrA gene; the 2 termini fold to resemble tRNA(Ala) and it encodes a 'tag peptide', a short internal open reading frame. During trans-translation Ala-aminoacylated tmRNA acts like a tRNA, entering the A-site of stalled ribosomes, displacing the stalled mRNA. The ribosome then switches to translate the ORF on the tmRNA; the nascent peptide is terminated with the 'tag peptide' encoded by the tmRNA and targeted for degradation. The ribosome is freed to recommence translation, which seems to be the essential function of trans-translation. In Streptococcus pyogenes serotype M4 (strain MGAS10750), this protein is SsrA-binding protein.